The sequence spans 252 residues: MIFMVIKKIFGENFNFNKNIDIKKIFKLDKNVKKDREENESYLDALKEIYEEIKNLEIYEKMTIGMAEIIIGYDNVEKTKKYIVIEPILTKEEIKLFLKLRKVVQALLDVPVEEIDKEKLEDYLKEKIKEIFDDLKLTLDDVTRHKLIYFLIKYLIGYGKIDALMKDENLEDISCTGVGKPVYVFHRKYEHLKTNIKFETDEELDSFCISLAQRCGKSLTLANPIVDGSLPDGSRLNVTLGRDISDMVQHLQ.

This sequence belongs to the GSP E family.

This is an uncharacterized protein from Methanocaldococcus jannaschii (strain ATCC 43067 / DSM 2661 / JAL-1 / JCM 10045 / NBRC 100440) (Methanococcus jannaschii).